A 662-amino-acid chain; its full sequence is Chaperone protein HtpG (662 aa).

The segment at 1–352 (MSKQTLSFQA…SADLPLNVSR (352 aa)) is a; substrate-binding. The segment at 353-594 (ELLQESRDVR…GDGMSTQLAR (242 aa)) is b. Residues 382-402 (HDRHDSPAPQPAEGADRVSDV) are disordered. The tract at residues 595-662 (LLKQAGQQAP…YVKRVNALLV (68 aa)) is c.

This sequence belongs to the heat shock protein 90 family. As to quaternary structure, homodimer.

The protein resides in the cytoplasm. Its function is as follows. Molecular chaperone. Has ATPase activity. The sequence is that of Chaperone protein HtpG from Verminephrobacter eiseniae (strain EF01-2).